We begin with the raw amino-acid sequence, 272 residues long: Neurogenin-2 (272 aa).

The interval 30–69 (LTPLSSSADEEEEEEPGASGGARRQRGAEAGQGARGGVAA) is disordered. The bHLH domain occupies 112–164 (TRRLKANNRERNRMHNLNAALDALREVLPTFPEDAKLTKIETLRFAHNYIWAL). The span at 197–239 (ASAALSSSGDSPSPASTWSCTNSPAPSSSVSSNSTSPYSCTLS) shows a compositional bias: low complexity. A disordered region spans residues 197–264 (ASAALSSSGD…PPDKHRYAPH (68 aa)).

In terms of assembly, efficient DNA binding requires dimerization with another bHLH protein.

The protein localises to the nucleus. In terms of biological role, transcriptional regulator. Involved in neuronal differentiation. Activates transcription by binding to the E box (5'-CANNTG-3'). This is Neurogenin-2 (NEUROG2) from Homo sapiens (Human).